The sequence spans 489 residues: 2-(3-amino-3-carboxypropyl)histidine synthase subunit 2 (489 aa).

At methionine 1 the chain carries N-acetylmethionine. At serine 7 the chain carries Phosphoserine. [4Fe-4S] cluster contacts are provided by cysteine 89, cysteine 110, and cysteine 341. Threonine 435 is modified (phosphothreonine). 2 positions are modified to phosphoserine: serine 446 and serine 456. Phosphothreonine is present on threonine 467. Serine 488 carries the post-translational modification Phosphoserine.

It belongs to the DPH1/DPH2 family. DPH2 subfamily. In terms of assembly, component of the 2-(3-amino-3-carboxypropyl)histidine synthase complex composed of DPH1, DPH2, DPH3 and a NADH-dependent reductase. Interacts with DPH1. It depends on [4Fe-4S] cluster as a cofactor. As to expression, strongly expressed in skeletal muscle. Moderately expressed in heart, small intestine, liver, pancreas, testis and colon. Weakly expressed in brain, placenta, kidney, spleen, thymus, prostate, ovary and lymphocytes.

The protein operates within protein modification; peptidyl-diphthamide biosynthesis. In terms of biological role, required for the first step of diphthamide biosynthesis, a post-translational modification of histidine which occurs in elongation factor 2. DPH1 and DPH2 transfer a 3-amino-3-carboxypropyl (ACP) group from S-adenosyl-L-methionine (SAM) to a histidine residue, the reaction is assisted by a reduction system comprising DPH3 and a NADH-dependent reductase. Facilitates the reduction of the catalytic iron-sulfur cluster found in the DPH1 subunit. The protein is 2-(3-amino-3-carboxypropyl)histidine synthase subunit 2 (DPH2) of Homo sapiens (Human).